We begin with the raw amino-acid sequence, 326 residues long: Vascular endothelial growth factor D (326 aa).

The signal sequence occupies residues Met1–Gly21. The propeptide occupies Phe22–Arg93. 3 cysteine pairs are disulfide-bonded: Cys116/Cys158, Cys147/Cys194, and Cys151/Cys196. N-linked (GlcNAc...) asparagine glycans are attached at residues Asn160 and Asn190. The propeptide occupies Ser211 to Pro326. The 1; approximate repeat unit spans residues Cys227 to Leu242. The interval Cys227 to Cys317 is 4 X 16 AA repeats of C-X(10)-C-X-C-X(1,3)-C. A run of 2 repeats spans residues Cys263–Cys278 and Cys282–Cys298. Residue Asn292 is glycosylated (N-linked (GlcNAc...) asparagine). A 4; truncated repeat occupies Cys306–Cys317.

This sequence belongs to the PDGF/VEGF growth factor family. As to quaternary structure, homodimer; non-covalent and antiparallel. Undergoes a complex proteolytic maturation which generates a variety of processed secreted forms with increased activity toward VEGFR-3 and VEGFR-2. VEGF-D first form an antiparallel homodimer linked by disulfide bonds before secretion. The fully processed VEGF-D is composed mostly of two VEGF homology domains (VHDs) bound by non-covalent interactions. As to expression, highly expressed in the spleen, kidney, lung, tongue, ovary and mammary gland.

The protein localises to the secreted. Growth factor active in angiogenesis, lymphangiogenesis and endothelial cell growth, stimulating their proliferation and migration and also has effects on the permeability of blood vessels. May function in the formation of the venous and lymphatic vascular systems during embryogenesis, and also in the maintenance of differentiated lymphatic endothelium in adults. Binds and activates VEGFR-3 (Flt4) receptor. The chain is Vascular endothelial growth factor D from Rattus norvegicus (Rat).